We begin with the raw amino-acid sequence, 330 residues long: D-alanine--D-alanine ligase (330 aa).

Residues 121 to 321 (NHYLKDFGVK…IKDVMTDIIE (201 aa)) form the ATP-grasp domain. 149 to 204 (VTRLGLPIFVKPNDGGSSFGVTKVKEVSAIQPAIAKAFGEGREVILERFIDGTEVT) provides a ligand contact to ATP. The Mg(2+) site is built by D275, E288, and N290.

It belongs to the D-alanine--D-alanine ligase family. Mg(2+) serves as cofactor. Mn(2+) is required as a cofactor.

It is found in the cytoplasm. The enzyme catalyses 2 D-alanine + ATP = D-alanyl-D-alanine + ADP + phosphate + H(+). It functions in the pathway cell wall biogenesis; peptidoglycan biosynthesis. In terms of biological role, cell wall formation. The sequence is that of D-alanine--D-alanine ligase from Parabacteroides distasonis (strain ATCC 8503 / DSM 20701 / CIP 104284 / JCM 5825 / NCTC 11152).